Consider the following 303-residue polypeptide: Sporulation regulatory protein (303 aa).

The region spanning Thr-26–Glu-213 is the FtsK domain. Position 43–50 (Gly-43–Ser-50) interacts with ATP.

Functionally, involved in sporulation inhibition and pock formation. The polypeptide is Sporulation regulatory protein (spi) (Streptomyces azureus).